Consider the following 137-residue polypeptide: Nucleoside diphosphate kinase (137 aa).

Residues K9, F57, R85, T91, R102, and N112 each contribute to the ATP site. Residue H115 is the Pros-phosphohistidine intermediate of the active site.

It belongs to the NDK family. As to quaternary structure, homotetramer. Requires Mg(2+) as cofactor.

Its subcellular location is the cytoplasm. It catalyses the reaction a 2'-deoxyribonucleoside 5'-diphosphate + ATP = a 2'-deoxyribonucleoside 5'-triphosphate + ADP. The enzyme catalyses a ribonucleoside 5'-diphosphate + ATP = a ribonucleoside 5'-triphosphate + ADP. Major role in the synthesis of nucleoside triphosphates other than ATP. The ATP gamma phosphate is transferred to the NDP beta phosphate via a ping-pong mechanism, using a phosphorylated active-site intermediate. This Wolinella succinogenes (strain ATCC 29543 / DSM 1740 / CCUG 13145 / JCM 31913 / LMG 7466 / NCTC 11488 / FDC 602W) (Vibrio succinogenes) protein is Nucleoside diphosphate kinase.